Here is a 342-residue protein sequence, read N- to C-terminus: S-adenosylmethionine:tRNA ribosyltransferase-isomerase (342 aa).

Belongs to the QueA family. In terms of assembly, monomer.

It localises to the cytoplasm. The enzyme catalyses 7-aminomethyl-7-carbaguanosine(34) in tRNA + S-adenosyl-L-methionine = epoxyqueuosine(34) in tRNA + adenine + L-methionine + 2 H(+). It functions in the pathway tRNA modification; tRNA-queuosine biosynthesis. Its function is as follows. Transfers and isomerizes the ribose moiety from AdoMet to the 7-aminomethyl group of 7-deazaguanine (preQ1-tRNA) to give epoxyqueuosine (oQ-tRNA). The polypeptide is S-adenosylmethionine:tRNA ribosyltransferase-isomerase (Oceanobacillus iheyensis (strain DSM 14371 / CIP 107618 / JCM 11309 / KCTC 3954 / HTE831)).